A 402-amino-acid polypeptide reads, in one-letter code: MQFDRLLTEARLATMVAGDDGYGVIEKAALGIKDGRIAWIGPMSEIPGEARETERLASRWVTPALIDCHTHLVFAGDRSDEFERRLGGESYESISRSGGGIARSVEATRAAGAAELAAGALTRIDALAQEGVGTVEIKSGYGLTRESERTMLRAARGVERASGMRVSATLLAAHAVPPEYKGESGRYIDEICIPLIREAAREGLADAVDAYCEGIGFSPEETRRLFIAAKAAGLPVKLHADQLSDTGGARLVAEFGGLSADHIEYTNAEGIAAMAKAGTVGVLLPGAFYALNETKKPPVEAMRAAGVDMAVATDANPGTSPLVSLLTAANMACILFGLTLPEAFAGMTRNAARALGLHGEIGTLEVGKAADLAIWDVERPAEIIQWIGRRPLHGRILAGEWQ.

Fe(3+)-binding residues include histidine 69 and histidine 71. Residues histidine 69 and histidine 71 each coordinate Zn(2+). Positions 78, 141, and 174 each coordinate 4-imidazolone-5-propanoate. N-formimidoyl-L-glutamate is bound at residue tyrosine 141. Histidine 239 contacts Fe(3+). Histidine 239 provides a ligand contact to Zn(2+). Glutamine 242 contacts 4-imidazolone-5-propanoate. Aspartate 314 contacts Fe(3+). Residue aspartate 314 participates in Zn(2+) binding. 2 residues coordinate N-formimidoyl-L-glutamate: asparagine 316 and glycine 318. Threonine 319 is a binding site for 4-imidazolone-5-propanoate.

This sequence belongs to the metallo-dependent hydrolases superfamily. HutI family. It depends on Zn(2+) as a cofactor. Fe(3+) serves as cofactor.

Its subcellular location is the cytoplasm. It catalyses the reaction 4-imidazolone-5-propanoate + H2O = N-formimidoyl-L-glutamate. The protein operates within amino-acid degradation; L-histidine degradation into L-glutamate; N-formimidoyl-L-glutamate from L-histidine: step 3/3. Catalyzes the hydrolytic cleavage of the carbon-nitrogen bond in imidazolone-5-propanoate to yield N-formimidoyl-L-glutamate. It is the third step in the universal histidine degradation pathway. This is Imidazolonepropionase from Maricaulis maris (strain MCS10) (Caulobacter maris).